A 520-amino-acid polypeptide reads, in one-letter code: Protein FAM124A (520 aa).

Disordered stretches follow at residues 1–34 (MDRK…ELSV) and 311–334 (FKSG…SQMD). A compositionally biased stretch (low complexity) spans 20–32 (SDYSRLSSTSSEL).

It belongs to the FAM124 family.

This Xenopus laevis (African clawed frog) protein is Protein FAM124A (fam124a).